The sequence spans 158 residues: Small ribosomal subunit protein uS9 (158 aa).

Residues 1 to 20 (MTEAVETETVEPTTDEATAA) form a disordered region. Over residues 10–20 (VEPTTDEATAA) the composition is skewed to low complexity.

It belongs to the universal ribosomal protein uS9 family.

The sequence is that of Small ribosomal subunit protein uS9 from Mycobacterium sp. (strain JLS).